The primary structure comprises 46 residues: Large ribosomal subunit protein bL36 (46 aa).

Belongs to the bacterial ribosomal protein bL36 family.

In Salmonella agona (strain SL483), this protein is Large ribosomal subunit protein bL36.